The chain runs to 215 residues: Probable GTP-binding protein EngB (215 aa).

The 175-residue stretch at 30 to 204 (TGIEVAFAGR…RQKLDTWFSE (175 aa)) folds into the EngB-type G domain. Residues 38 to 45 (GRSNAGKS), 65 to 69 (GRTQL), 83 to 86 (DLPG), 150 to 153 (TKAD), and 183 to 185 (FSS) contribute to the GTP site. Positions 45 and 67 each coordinate Mg(2+).

This sequence belongs to the TRAFAC class TrmE-Era-EngA-EngB-Septin-like GTPase superfamily. EngB GTPase family. Mg(2+) is required as a cofactor.

In terms of biological role, necessary for normal cell division and for the maintenance of normal septation. This is Probable GTP-binding protein EngB from Escherichia coli O1:K1 / APEC.